Consider the following 366-residue polypeptide: MLIWLVELANHVQFFNLFRYITFRTGAAMFTAALIVFLFGPKIIASLKVRQGKGQPIRADGPQTHFKKSGTPTMGGLMILAGIVGSSLLWADLSNVYVVATLLVTLGFGAIGFYDDYLKVTKQSDKGFSGKARLAIEFLIAGIAVFFMMEAAKISAPQGPHLATSIAFPFFKDALLNVGYFFIVFGGFVIVSAGNAVNLTDGLDGLAIVPVMIASAAFGLIAYLAGNAVFSGYLQINFVPGTGELAVILGSVIGAGLGFLWFNAPPAAIFMGDTGSLALGGLIGTVAVATKHEIVMVIIGGLFVMETLSVIIQVFWYKRTKKRVFLMAPIHHHFEKKGWTESQVVIRFWIIAVGLAMLGLATLKLR.

A run of 10 helical transmembrane segments spans residues 27-47 (AAMF…IASL), 71-91 (TPTM…LLWA), 93-113 (LSNV…AIGF), 134-154 (LAIE…AAKI), 174-194 (ALLN…VSAG), 205-225 (GLAI…AYLA), 245-265 (LAVI…FNAP), 268-288 (AIFM…TVAV), 294-314 (IVMV…IIQV), and 343-363 (QVVI…LATL).

The protein belongs to the glycosyltransferase 4 family. MraY subfamily. The cofactor is Mg(2+).

The protein localises to the cell inner membrane. The catalysed reaction is UDP-N-acetyl-alpha-D-muramoyl-L-alanyl-gamma-D-glutamyl-meso-2,6-diaminopimeloyl-D-alanyl-D-alanine + di-trans,octa-cis-undecaprenyl phosphate = di-trans,octa-cis-undecaprenyl diphospho-N-acetyl-alpha-D-muramoyl-L-alanyl-D-glutamyl-meso-2,6-diaminopimeloyl-D-alanyl-D-alanine + UMP. It functions in the pathway cell wall biogenesis; peptidoglycan biosynthesis. In terms of biological role, catalyzes the initial step of the lipid cycle reactions in the biosynthesis of the cell wall peptidoglycan: transfers peptidoglycan precursor phospho-MurNAc-pentapeptide from UDP-MurNAc-pentapeptide onto the lipid carrier undecaprenyl phosphate, yielding undecaprenyl-pyrophosphoryl-MurNAc-pentapeptide, known as lipid I. The protein is Phospho-N-acetylmuramoyl-pentapeptide-transferase of Allorhizobium ampelinum (strain ATCC BAA-846 / DSM 112012 / S4) (Agrobacterium vitis (strain S4)).